Here is a 408-residue protein sequence, read N- to C-terminus: Glutamate N-acetyltransferase (408 aa).

Positions 150, 176, 189, 271, 403, and 408 each coordinate substrate. The active-site Nucleophile is Thr-189.

The protein belongs to the ArgJ family. Heterotetramer of two alpha and two beta chains.

It localises to the cytoplasm. The catalysed reaction is N(2)-acetyl-L-ornithine + L-glutamate = N-acetyl-L-glutamate + L-ornithine. It functions in the pathway amino-acid biosynthesis; L-arginine biosynthesis; L-ornithine and N-acetyl-L-glutamate from L-glutamate and N(2)-acetyl-L-ornithine (cyclic): step 1/1. In terms of biological role, catalyzes the transfer of the acetyl group from N(2)-acetylornithine to glutamate, forming N-acetylglutamate and L-ornithine. This Methanococcus vannielii (strain ATCC 35089 / DSM 1224 / JCM 13029 / OCM 148 / SB) protein is Glutamate N-acetyltransferase.